Here is a 551-residue protein sequence, read N- to C-terminus: uncharacterized protein (551 aa).

The next 6 membrane-spanning stretches (helical) occupy residues 1–21 (MIAY…IVNS), 25–45 (WTYF…LMVS), 99–119 (GALF…FGFN), 124–144 (LGVL…SLMW), 266–286 (FAFL…GVFY), and 490–510 (FLDL…SAED).

The protein resides in the cell membrane. This is an uncharacterized protein from Haemophilus influenzae (strain ATCC 51907 / DSM 11121 / KW20 / Rd).